A 189-amino-acid chain; its full sequence is High affinity copper uptake protein 1 (189 aa).

Residues 1 to 67 (MDHSAHMGMS…AGLVINTAGE (67 aa)) are Extracellular-facing. The Methionine segments (Mets) motif motif lies at 13–18 (MGMSDM). Residues 15–36 (MSDMNHSTTMPPSHHHPTSSGS) are disordered. Residues 20 to 36 (HSTTMPPSHHHPTSSGS) are compositionally biased toward low complexity. Residues 68–88 (MAGAFVAVFLLAMFYEGLKIA) traverse the membrane as a helical segment. The Cytoplasmic portion of the chain corresponds to 89-131 (REGLLRKSQVSIRYNSMPVPGPNGTILMETHKTVGQQMLSFPH). Thr-113 is modified (phosphothreonine). Residues 132–152 (LLQTVLHIIQVVISYFLMLIF) form a helical membrane-spanning segment. Residues 153–155 (MTY) lie on the Extracellular side of the membrane. The helical transmembrane segment at 156–176 (NGYLCIAVAAGAGTGYFLFSW) threads the bilayer. Over 177-189 (KKAVVVDITEHCH) the chain is Cytoplasmic. Cys-188 bears the Cysteine sulfenic acid (-SOH) mark.

This sequence belongs to the copper transporter (Ctr) (TC 1.A.56) family. SLC31A subfamily. In terms of assembly, homotrimer; is stabilized by cisplatin via interactions between cisplatin and the methionine-rich clusters, and could be crucial for the copper(2+) reduction process and copper(1+) stabilization. Heterotrimer between SLC31A1, CCS and SOD1; this heterotrimer is copper(1+)-mediated and its maintenance is regulated through SOD1 activation. Interacts with KDR; this interaction is induced upon VEGFA stimulation leading to SLC31A1 and KDR subsequent co-internalization to early endosomes, thereby activating KDR downstream signaling in endothelial cells. Interacts (via C-terminal domain) with ATOX1 (via dimer form); this interaction improves ATOX1 stability and controls intracellular copper(1+) levels. Interacts with SLC31A2; this interaction stabilizes SLC31A2 and protects its from ubiquitination and degradation. Interacts (via C-terminal domain) with CCS; this interaction is copper(1+)-mediated. In terms of processing, proteolytic cleavage, leading to a truncated form, is facilitated by SLC31A2 and initiated preferentially by CTSL and to a minor extend by CTSB in endolysosomal compartments. A post-CTSL/cathepsin L processing occurs to yield to the fully truncated form. Post-translationally, sulfenylated at Cys-188 after stimulation with VEGFA, which induces SLC31A1-KDR disulfide bond formation and their co-internalization to early endosomes, driving to a sustained VEGFR2 signaling.

Its subcellular location is the cell membrane. It is found in the early endosome membrane. The protein resides in the recycling endosome membrane. It localises to the apical cell membrane. The protein localises to the late endosome membrane. Its subcellular location is the basolateral cell membrane. It carries out the reaction Ag(+)(out) = Ag(+)(in). The enzyme catalyses Cu(+)(out) = Cu(+)(in). Uniporter that mediates the transport of copper(1+) from the extracellular space to the cytoplasm, across the plasma membrane and delivers directly copper(1+) to specific chaperone such as ATOX1, via a copper(1+)- mediated transient interaction between the C-terminal domain and a copper(1+) chaperone, thus controlling intracellular copper(1+) levels. May function in copper(1+) import from the apical membrane thus may drive intestinal copper absorption. The copper(1+) transport mechanism is sodium-independent, saturable and of high-affinity. Also mediates the uptake of silver(1+). May function in the influx of the platinum-containing chemotherapeutic agents. The platinum-containing chemotherapeutic agents uptake is saturable. In vitro, mediates the transport of cadmium(2+) into cells. Also participates in the first step of copper(2+) acquisition by cells through a direct transfer of copper(2+) from copper(2+) carriers in blood, such as ALB to the N-terminal domain of SLC31A1, leading to copper(2+) reduction and probably followed by copper(1+) stabilization. In addition, functions as a redox sensor to promote angiogenesis in endothelial cells, in a copper(1+) transport independent manner, by transmitting the VEGF-induced ROS signal through a sulfenylation at Cys-189 leadin g to a subsequent disulfide bond formation between SLC31A1 and KDR. The SLC31A1-KDR complex is then co-internalized to early endosomes, driving a sustained VEGFR2 signaling. Its function is as follows. Mobilizes copper(1+) out of the endosomal compartment, making copper(1+) available for export out of the cells. In Sus scrofa (Pig), this protein is High affinity copper uptake protein 1.